Consider the following 391-residue polypeptide: Phosphoprotein (391 aa).

Phosphothreonine occurs at positions 10, 16, and 39. Phosphoserine is present on S69. 2 disordered regions span residues 82-101 (SSSE…FAQT) and 143-208 (PRTS…PANV). T91, T150, and T165 each carry phosphothreonine. S188 bears the Phosphoserine mark. A compositionally biased stretch (polar residues) spans 198–208 (LPQQDSTPANV). Residues 218–245 (ANEIMDLLRGMDARLQHLEQKVDKVLAQ) adopt a coiled-coil conformation. T250 is subject to Phosphothreonine. Phosphoserine is present on S257. Phosphothreonine is present on residues T258 and T282. Phosphoserine is present on residues S292 and S294. The residue at position 298 (T298) is a Phosphothreonine. A phosphoserine mark is found at S301 and S374. The tract at residues 343–391 (AGRKVMITKMITDCVANPQMKQAFEQRLAKASTEDALNDIKRDIIRSAI) is interaction with the nucleoprotein. The tract at residues 348-391 (MITKMITDCVANPQMKQAFEQRLAKASTEDALNDIKRDIIRSAI) is x domain (XD). T375 is subject to Phosphothreonine.

This sequence belongs to the rubulavirus/avulavirus P protein family. As to quaternary structure, homotetramer. Interacts (via multimerization domain) with polymerase L; this interaction forms the polymerase L-P complex. Interacts (via N-terminus) with N0 (via Ncore); this interaction allows P to chaperon N0 to avoid N polymerization before encapsidation. Interacts (via C-terminus) with N-RNA template; this interaction positions the polymerase on the template for both transcription and replication. Interacts with host RPS6KB1 kinase; this interaction may play a role in the viral replication and transcription.

It localises to the virion. Essential cofactor of the RNA polymerase L that plays a central role in the transcription and replication by forming the polymerase complex with RNA polymerase L and recruiting L to the genomic N-RNA template for RNA synthesis. Also plays a central role in the encapsidation of nascent RNA chains by forming the encapsidation complex with the nucleocapsid protein N (N-P complex). Acts as a chaperone for newly synthesized free N protein, so-called N0, allowing encapsidation of nascent RNA chains during replication. The nucleoprotein protein N prevents excessive phosphorylation of P, which leads to down-regulation of viral transcription/ replication. Participates, together with N, in the formation of viral factories (viroplasms), which are large inclusions in the host cytoplasm where replication takes place. The chain is Phosphoprotein (V/P) from Mumps orthorubulavirus (MuV).